The chain runs to 1025 residues: Putative calcium-transporting ATPase 11, plasma membrane-type (1025 aa).

Residues 1–157 (MSNLLKDFEV…NRYTEKPARS (157 aa)) are Cytoplasmic-facing. The interaction with calmodulin stretch occupies residues 19 to 30 (ARQRWRSSVGLV). A helical transmembrane segment spans residues 158–178 (FLTFVWEALQDITLIILMVCA). The Lumenal segment spans residues 179–196 (VVSIGVGVATEGFPKGMY). The helical transmembrane segment at 197–217 (DGTGILLSIILVVMVTAISDY) threads the bilayer. The Cytoplasmic portion of the chain corresponds to 218–345 (KQSLQFRDLD…EDETPLQVKL (128 aa)). The helical transmembrane segment at 346–365 (NGVATIIGKIGLGFAVLTFV) threads the bilayer. The Lumenal segment spans residues 366 to 395 (VLCIRFVVEKATAGSITEWSSEDALTLLDY). The helical transmembrane segment at 396 to 413 (FAIAVTIIVVAVPEGLPL) threads the bilayer. Residues 414–801 (AVTLSLAFAM…KWGRAVYINI (388 aa)) are Cytoplasmic-facing. D451 serves as the catalytic 4-aspartylphosphate intermediate. D746 and D750 together coordinate Mg(2+). The helical transmembrane segment at 802–820 (QKFVQFQLTVNVVALIINF) threads the bilayer. The Lumenal portion of the chain corresponds to 821 to 831 (VSACITGSAPL). Residues 832–852 (TAVQLLWVNMIMDTLGALALA) traverse the membrane as a helical segment. Topologically, residues 853–872 (TEPPNEGLMKRQPIGRTASF) are cytoplasmic. A helical transmembrane segment spans residues 873-895 (ITRAMWRNIIGQSIYQLIVLGIL). Topologically, residues 896–907 (NFAGKQILNLNG) are lumenal. Residues 908–929 (PDSTIVLNTIIFNSFVFCQVFN) form a helical membrane-spanning segment. Over 930-947 (EVNSREIEKINVFEGMFK) the chain is Cytoplasmic. Residues 948-969 (SWVFVAVMTATVGFQVIIVEFL) traverse the membrane as a helical segment. Residues 970 to 979 (GAFASTVPLS) are Lumenal-facing. Residues 980–1001 (WQHWLLCILIGSVSMILAVGLK) traverse the membrane as a helical segment. Residues 1002–1025 (CIPVESNRHHDGYELLPSGPSDSA) lie on the Cytoplasmic side of the membrane.

It belongs to the cation transport ATPase (P-type) (TC 3.A.3) family. Type IIB subfamily.

The protein resides in the membrane. The catalysed reaction is Ca(2+)(in) + ATP + H2O = Ca(2+)(out) + ADP + phosphate + H(+). Its activity is regulated as follows. Activated by calmodulin. In terms of biological role, this magnesium-dependent enzyme catalyzes the hydrolysis of ATP coupled with the translocation of calcium from the cytosol out of the cell or into organelles. This chain is Putative calcium-transporting ATPase 11, plasma membrane-type (ACA11), found in Arabidopsis thaliana (Mouse-ear cress).